A 307-amino-acid chain; its full sequence is Malonyl-[acyl-carrier protein] O-methyltransferase (307 aa).

Belongs to the methyltransferase superfamily.

It carries out the reaction malonyl-[ACP] + S-adenosyl-L-methionine = malonyl-[ACP] methyl ester + S-adenosyl-L-homocysteine. It functions in the pathway cofactor biosynthesis; biotin biosynthesis. Its function is as follows. Converts the free carboxyl group of a malonyl-thioester to its methyl ester by transfer of a methyl group from S-adenosyl-L-methionine (SAM). It allows to synthesize pimeloyl-ACP via the fatty acid synthetic pathway. This is Malonyl-[acyl-carrier protein] O-methyltransferase from Nitrosospira multiformis (strain ATCC 25196 / NCIMB 11849 / C 71).